The following is a 176-amino-acid chain: Flavodoxin (176 aa).

Positions 4 to 165 (IGIFFGSDTG…RVEKWVKQVA (162 aa)) constitute a Flavodoxin-like domain.

Belongs to the flavodoxin family. FMN is required as a cofactor.

Low-potential electron donor to a number of redox enzymes. This is Flavodoxin (fldA) from Klebsiella pneumoniae.